The primary structure comprises 383 residues: Chorismate synthase (383 aa).

Arg-40 and Arg-46 together coordinate NADP(+). FMN contacts are provided by residues 128–130 (RAS), Gly-291, 306–310 (KPIPT), and Arg-332.

Belongs to the chorismate synthase family. As to quaternary structure, homotetramer. FMNH2 is required as a cofactor.

The catalysed reaction is 5-O-(1-carboxyvinyl)-3-phosphoshikimate = chorismate + phosphate. It functions in the pathway metabolic intermediate biosynthesis; chorismate biosynthesis; chorismate from D-erythrose 4-phosphate and phosphoenolpyruvate: step 7/7. Catalyzes the anti-1,4-elimination of the C-3 phosphate and the C-6 proR hydrogen from 5-enolpyruvylshikimate-3-phosphate (EPSP) to yield chorismate, which is the branch point compound that serves as the starting substrate for the three terminal pathways of aromatic amino acid biosynthesis. This reaction introduces a second double bond into the aromatic ring system. This Moorella thermoacetica (strain ATCC 39073 / JCM 9320) protein is Chorismate synthase.